The sequence spans 395 residues: RNA pseudouridine synthase 7 (395 aa).

The disordered stretch occupies residues 1–21 (MKRKQQEDDNDDGVEKAVSPV). One can recognise an S4 RNA-binding domain in the interval 74 to 136 (KTIVDLFADE…HEPPVMIDDV (63 aa)). The active site involves aspartate 187. Over residues 244–255 (EGRSTAEDANSS) the composition is skewed to polar residues. Positions 244–263 (EGRSTAEDANSSGDDKKVKG) are disordered.

It belongs to the pseudouridine synthase RluA family.

The catalysed reaction is a uridine in RNA = a pseudouridine in RNA. The sequence is that of RNA pseudouridine synthase 7 from Arabidopsis thaliana (Mouse-ear cress).